Consider the following 1337-residue polypeptide: MPSLQLLQLTERGRGLVASRRKSILLAAGIVAAGGTAVYLKSRVASRRPDSSRLCNGQSDDDETLEKLTATDQNAKITTKKKKGGGLKSLQVLTAILLSQMGKMGARDLLALVATVVFRTALSNRLAKVQGFLFRAAFLRRAPLFLRLISENIMLCFMLSTLHSTSKYITGALSLRFRKILTKIIHSHYFENMVYYKISHVDGRITHPEQRIASDVPRFSSELSDLILDDLTAVTDGILYAWRLCSYASPKYIFWILAYVLGAGTAIRNFSPSFGKLMSKEQQLEGEYRQLHSRLRTHSESIAFYGGETREESHIQQKFKNLVSHMSHVLHDHWWFGMIQDFLLKYLGATVAVILIIEPFFSGHLRPDDSTLGRAEMLSNIRYHTSVIISLFQALGTLSISSRRLNRLSGYADRIHELMAVSRELSGDDKSSFQRNRSRNYLSEANYVEFSDVKVVTPTGNVLVEDLTLRVEQGSNLLITGPNGSGKSSLFRVLGGLWPLVSGHIVKPGVGSDLNKEIFYVPQRPYMAVGTLRDQLIYPLTSGQESELLTEIGMVELLKNVDLEYLLDRYQPEKEVNWGDELSLGEQQRLGMARLFYHKPKFAILDECTSAVTTDMEERFAAKVRAMGTSCITISHRPALVAFHDVVLSLDGEGGWSVHYKRDDSALLTDAEIDSVKSSDTDRQNDAMVVQRAFAAARKESATNSKAQSYQTQLIARSPVVDKSVVLPRFPQPQTSQRALPSRVAAMLNVLIPTIFDKQGAQLLAVACLVVSRTLISDRIASLNGTTVKYVLEQDKAAFVRLIGLSVLQSGASSIIAPSLRHLTQRLALGWRIRLTQHLLRNYLRNNAFYKVFHMSGNSIDADQRLTRDLEKLTADLSGLLTGMVKPSVDILWFTWRMKLLTGQRGVAILYTYMLLGLGFLRRVAPDFGDLAGEEQQLEGKFRFMHERLNTHAESIAFFGGGAREKAMVDKKFRALLDHSLMLLRKKWLYGILDDFVTKQLPNNVTWGLSLLYALEHKGDRALVSTQGELAHALRYLASVVSQSFMAFGDILELHKKFLELSGGINRIFELDEFLDASQSGVTSENQTSRLDSQDLLSFSEVDIITPAQKLMASKLSCEIVSGKSLLVTGPNGSGKTSVFRVLRDIWPTVCGRLTKPSLDIKELGSGNGMFFVPQRPYTCLGTLRDQIIYPLSKEEAEKRAAKLYTSGESSTEAGSILDSHLKTILENVRLVYLLERDVGGWDATTNWEDILSLGEQQRLGMARLFFHRPKFGVLDECTNATSVDVEEQLYRVARDMGVTFITSSQRPALIPFHSLELRLIDGEGNWELRSIEQTTE.

The next 4 membrane-spanning stretches (helical) occupy residues 24-44 (ILLAAGIVAAGGTAVYLKSRV), 142-162 (APLFLRLISENIMLCFMLSTL), 247-267 (YASPKYIFWILAYVLGAGTAI), and 342-362 (FLLKYLGATVAVILIIEPFFS). The ABC transmembrane type-1 1 domain occupies 117 to 395 (VFRTALSNRL…SVIISLFQAL (279 aa)). An ABC transporter 1 domain is found at 448 to 695 (VEFSDVKVVT…DAMVVQRAFA (248 aa)). 481-488 (GPNGSGKS) contacts ATP. The region spanning 751 to 1049 (LIPTIFDKQG…VVSQSFMAFG (299 aa)) is the ABC transmembrane type-1 2 domain. Residues 900-920 (LLTGQRGVAILYTYMLLGLGF) traverse the membrane as a helical segment. An ABC transporter 2 domain is found at 1091 to 1337 (LDSQDLLSFS…ELRSIEQTTE (247 aa)). 1130 to 1137 (GPNGSGKT) provides a ligand contact to ATP.

Belongs to the ABC transporter superfamily. ABCD family. Peroxisomal fatty acyl CoA transporter (TC 3.A.1.203) subfamily.

It is found in the peroxisome membrane. The protein localises to the glyoxysome membrane. It catalyses the reaction an acyl-CoA(out) + ATP + H2O = an acyl-CoA(in) + ADP + phosphate + H(+). Its function is as follows. Contributes to the transport of fatty acids and their derivatives (acyl CoAs) across the peroxisomal membrane. Provides acetate to the glyoxylate cycle in developing seedlings. Involved in pollen tube elongation, ovule fertilization, and seeds germination after imbibition (controls the switch between the opposing developmental programs of dormancy and germination), probably by promoting beta-oxidation of storage lipids during gluconeogenesis. Required for biosynthesis of jasmonic acid and conversion of indole butyric acid to indole acetic acid. Confers sensitivity to monofluoroacetic acid (FAc), a toxic acetate analog, and to 2,4-dichlorophenoxybutyric acid (2,4-DB) and indole-3-butyric acid (IBA), two precursors of auxin after beta-oxidation. The protein is ABC transporter D family member 1 of Arabidopsis thaliana (Mouse-ear cress).